Reading from the N-terminus, the 74-residue chain is uncharacterized protein (74 aa).

Composition is skewed to basic and acidic residues over residues 1 to 13 (MKKQ…HQLK) and 20 to 60 (IKAK…KSFE). The tract at residues 1 to 74 (MKKQKSIDKH…ESQMDWHQYK (74 aa)) is disordered. Polar residues predominate over residues 64–74 (NESQMDWHQYK).

This is an uncharacterized protein from Bacillus subtilis (strain 168).